We begin with the raw amino-acid sequence, 120 residues long: Aspartate 1-decarboxylase (120 aa).

The active-site Schiff-base intermediate with substrate; via pyruvic acid is serine 25. Serine 25 is modified (pyruvic acid (Ser)). Threonine 57 lines the substrate pocket. Tyrosine 58 serves as the catalytic Proton donor. 73–75 is a binding site for substrate; that stretch reads GAA.

The protein belongs to the PanD family. Heterooctamer of four alpha and four beta subunits. Pyruvate serves as cofactor. Post-translationally, is synthesized initially as an inactive proenzyme, which is activated by self-cleavage at a specific serine bond to produce a beta-subunit with a hydroxyl group at its C-terminus and an alpha-subunit with a pyruvoyl group at its N-terminus.

Its subcellular location is the cytoplasm. It carries out the reaction L-aspartate + H(+) = beta-alanine + CO2. The protein operates within cofactor biosynthesis; (R)-pantothenate biosynthesis; beta-alanine from L-aspartate: step 1/1. In terms of biological role, catalyzes the pyruvoyl-dependent decarboxylation of aspartate to produce beta-alanine. This Thermus thermophilus (strain ATCC 27634 / DSM 579 / HB8) protein is Aspartate 1-decarboxylase.